Here is a 418-residue protein sequence, read N- to C-terminus: Serine/threonine transporter SstT (418 aa).

The next 8 helical transmembrane spans lie at 21-41, 49-69, 83-103, 142-162, 190-210, 217-237, 299-319, and 331-351; these read ILIG…AAIA, FVGA…IASI, ILFL…VVSF, ALLN…GIAL, FAPL…GFGA, LLVV…PLIV, MAGA…TLGI, and VVAA…LLLI.

This sequence belongs to the dicarboxylate/amino acid:cation symporter (DAACS) (TC 2.A.23) family.

It is found in the cell inner membrane. It carries out the reaction L-serine(in) + Na(+)(in) = L-serine(out) + Na(+)(out). The catalysed reaction is L-threonine(in) + Na(+)(in) = L-threonine(out) + Na(+)(out). Involved in the import of serine and threonine into the cell, with the concomitant import of sodium (symport system). In Yersinia pestis bv. Antiqua (strain Antiqua), this protein is Serine/threonine transporter SstT.